Reading from the N-terminus, the 118-residue chain is Large ribosomal subunit protein bL19 (118 aa).

The protein belongs to the bacterial ribosomal protein bL19 family.

This protein is located at the 30S-50S ribosomal subunit interface and may play a role in the structure and function of the aminoacyl-tRNA binding site. The polypeptide is Large ribosomal subunit protein bL19 (Ligilactobacillus salivarius (strain UCC118) (Lactobacillus salivarius)).